The sequence spans 559 residues: CTP synthase (559 aa).

The tract at residues methionine 1–leucine 270 is amidoligase domain. A CTP-binding site is contributed by serine 13. Serine 13 contributes to the UTP binding site. Residues serine 14–isoleucine 19 and aspartate 71 contribute to the ATP site. The Mg(2+) site is built by aspartate 71 and glutamate 144. Residues aspartate 151–glutamate 153, lysine 191–glutamine 196, and lysine 227 contribute to the CTP site. Residues lysine 191–glutamine 196 and lysine 227 each bind UTP. A Glutamine amidotransferase type-1 domain is found at threonine 295–serine 548. Residue glycine 357 participates in L-glutamine binding. Cysteine 384 (nucleophile; for glutamine hydrolysis) is an active-site residue. L-glutamine is bound by residues leucine 385 to glutamine 388, glutamate 408, and arginine 474. Residues histidine 521 and glutamate 523 contribute to the active site.

It belongs to the CTP synthase family. In terms of assembly, homotetramer.

The enzyme catalyses UTP + L-glutamine + ATP + H2O = CTP + L-glutamate + ADP + phosphate + 2 H(+). The catalysed reaction is L-glutamine + H2O = L-glutamate + NH4(+). It catalyses the reaction UTP + NH4(+) + ATP = CTP + ADP + phosphate + 2 H(+). The protein operates within pyrimidine metabolism; CTP biosynthesis via de novo pathway; CTP from UDP: step 2/2. Its activity is regulated as follows. Allosterically activated by GTP, when glutamine is the substrate; GTP has no effect on the reaction when ammonia is the substrate. The allosteric effector GTP functions by stabilizing the protein conformation that binds the tetrahedral intermediate(s) formed during glutamine hydrolysis. Inhibited by the product CTP, via allosteric rather than competitive inhibition. Its function is as follows. Catalyzes the ATP-dependent amination of UTP to CTP with either L-glutamine or ammonia as the source of nitrogen. Regulates intracellular CTP levels through interactions with the four ribonucleotide triphosphates. The protein is CTP synthase of Paracidovorax citrulli (strain AAC00-1) (Acidovorax citrulli).